The following is a 200-amino-acid chain: GTP cyclohydrolase 1 (200 aa).

C87, H90, and C158 together coordinate Zn(2+).

It belongs to the GTP cyclohydrolase I family. As to quaternary structure, toroid-shaped homodecamer, composed of two pentamers of five dimers.

The enzyme catalyses GTP + H2O = 7,8-dihydroneopterin 3'-triphosphate + formate + H(+). It functions in the pathway cofactor biosynthesis; 7,8-dihydroneopterin triphosphate biosynthesis; 7,8-dihydroneopterin triphosphate from GTP: step 1/1. The polypeptide is GTP cyclohydrolase 1 (Xanthomonas campestris pv. campestris (strain ATCC 33913 / DSM 3586 / NCPPB 528 / LMG 568 / P 25)).